The primary structure comprises 368 residues: MLWHAMPPELNTARLMAGAGPAPMLAAAAGWQTLSAALDAQAVELTARLNSLGEAWTGGGSDKALAAATPMVVWLQTASTQAKTRAMQATAQAAAYTQAMATTPSLPEIAANHITQAVLTATNFFGINTIPIALTEMDYFIRMWNQAALAMEVYQAETAVNTLFEKLEPMASILDPGASQSTTNPIFGMPSPGSSTPVGQLPPAATQTLGQLGEMSGPMQQLTQPLQQVTSLFSQVGGTGGGNPADEEAAQMGLLGTSPLSNHPLAGGSGPSAGAGLLRAESLPGAGGSLTRTPLMSQLIEKPVAPSVMPAAAAGSSATGGAAPVGAGAMGQGAQSGGSTRPGLVAPAPLAQEREEDDEDDWDEEDDW.

2 disordered regions span residues 255–280 (LGTS…LLRA) and 312–368 (AAAG…EDDW). Residues 312–327 (AAAGSSATGGAAPVGA) are compositionally biased toward low complexity. A compositionally biased stretch (acidic residues) spans 354 to 368 (REEDDEDDWDEEDDW).

It belongs to the mycobacterial PPE family. In terms of assembly, homodimer. Interacts with PE35. PE35/PPE68 complex interacts with human TLR2.

It is found in the secreted. The protein localises to the cell wall. The protein resides in the cell membrane. Its subcellular location is the cell surface. Functionally, plays a major role in RD1-associated pathogenesis, and may contribute to the establishment and maintenance of M.tuberculosis infection. Together with PE35, stimulates the secretion of IL-10 and MCP-1 from human macrophages, via the interaction with human Toll-like receptor 2 (TLR2). This chain is PPE family immunomodulator PPE68 (PPE68), found in Mycobacterium tuberculosis (strain CDC 1551 / Oshkosh).